Reading from the N-terminus, the 637-residue chain is MNTGIIDLFDNHVDSIPTILPHQLATLDYLVRTIIDENRSVLLFHIMGSGKTIIALLFALVASRFKKVYILVPNINILKIFNYNMGVAMNLFNDEFIAENIFIHSTTSFYSLNYNDNVINYNGLSRYNNSIFIVDEAHNIFGNNTGELMTVIKNKNKIPFLLLSGSPITNTPNTLGHIIDLMSEETIDFGEIISRGKKVIQTLLNERGVNVLKDLLKGRISYYEMPDKDLPTIRYHGRKFLDTRVVYCHMSKLQERDYMITRRQLCYHEMFDKNMYNVSTAVLGQLNLMNNLDTLFQEQDKELYPNLKINNGVLYGEELVTLNISSKFKYFINRIQTLNGKHFIYFSNSTYGGLVIKYIMLSNGYSEYNGSQGTNPHMINGKPKTFAIVTSKMKSSLEDLLDVYNSPENDDGSQLMFLFSSNIMSESYTLKEVRHIWFMTIPDTFSQYNQILGRSIRKFSYADISEPVNVYLLAAVYSDFNDEVTSLNDYTQDELINVLPFDIKKLLYLKFKTKETNRIYSILQEMSETYSLPPHPSIVKVLLGELVRQFFYNNSRIKYNDSKLLKMVTSVIKNKEDARNYIDDIVNGHFFVSNKVFDKSLLYKYENDIITVPFRLSYEPFVWGVNFRKEYNVVSSP.

One can recognise a Helicase ATP-binding domain in the interval Arg32–Glu185. Residue His45–Thr52 participates in ATP binding. Residues Asp135–His138 carry the DEXH box motif. Residues Lys327–Leu507 enclose the Helicase C-terminal domain.

This sequence belongs to the helicase family. VETF subfamily. In terms of assembly, heterodimer of a 70 kDa and a 82 kDa subunit. Part of the early transcription complex composed of ETF, RAP94/OPG109, and the DNA-directed RNA polymerase.

The protein localises to the virion. Functionally, acts with RNA polymerase to initiate transcription from early gene promoters. Is recruited by the RPO-associated protein of 94 kDa RAP94/OPG109 to form the early transcription complex, which also contains the core RNA polymerase. ETF heterodimer binds to early gene promoters. This chain is Early transcription factor 70 kDa subunit (OPG118), found in Homo sapiens (Human).